Reading from the N-terminus, the 461-residue chain is tRNA modification GTPase MnmE (461 aa).

(6S)-5-formyl-5,6,7,8-tetrahydrofolate is bound by residues Lys32, Glu89, and Lys128. The 164-residue stretch at 224–387 folds into the TrmE-type G domain; it reads GHALSIVGKP…LSQKISEFFP (164 aa). Asn234 is a K(+) binding site. Residues 234 to 239, 253 to 259, and 278 to 281 each bind GTP; these read NAGKSS, SDIKGTT, and DTAG. Ser238 serves as a coordination point for Mg(2+). Residues Ser253, Ile255, and Thr258 each contribute to the K(+) site. Thr259 contributes to the Mg(2+) binding site. A (6S)-5-formyl-5,6,7,8-tetrahydrofolate-binding site is contributed by Lys461.

This sequence belongs to the TRAFAC class TrmE-Era-EngA-EngB-Septin-like GTPase superfamily. TrmE GTPase family. Homodimer. Heterotetramer of two MnmE and two MnmG subunits. It depends on K(+) as a cofactor.

It is found in the cytoplasm. Functionally, exhibits a very high intrinsic GTPase hydrolysis rate. Involved in the addition of a carboxymethylaminomethyl (cmnm) group at the wobble position (U34) of certain tRNAs, forming tRNA-cmnm(5)s(2)U34. This Helicobacter pylori (strain J99 / ATCC 700824) (Campylobacter pylori J99) protein is tRNA modification GTPase MnmE.